We begin with the raw amino-acid sequence, 313 residues long: MAHCLHPEKFFPVVKSVALPPGSLNGKVALVTGGGTGLGKAIATTFAHLGASVAIAARRLDVLEKTADEIRSSTGGVCEPFQMDVKDPAKVAKAFDAVEKKLGHTPDILINNAAGNFIMATERLSPNAYGTIIDIVLKGTLHVTTELGRRCIQQKRGASVLSITTLYAQSGAPFVVPSAVSKAGVENMTKSLASEWAKHGLRFNAIAPGPIPTEGAFGRLFAGELKDSGDAMKASVPVGRLGHPEEIANLAAFMSSDFMSWMNGAIIDFDGGQQHIHHGSHMGQFLHEWDNEKWEETENLIRGRTGKEKKSKL.

29–61 (ALVTGGGTGLGKAIATTFAHLGASVAIAARRLD) provides a ligand contact to NADP(+).

This sequence belongs to the short-chain dehydrogenases/reductases (SDR) family. 2,4-dienoyl-CoA reductase subfamily.

This is an uncharacterized protein from Caenorhabditis elegans.